Reading from the N-terminus, the 169-residue chain is Probable metallophosphoesterase YsnB (169 aa).

7 residues coordinate Mn(2+): Asp8, His10, Asp35, Asn54, His78, His107, and His109.

It belongs to the metallophosphoesterase superfamily. YfcE family. Mn(2+) is required as a cofactor.

This Bacillus subtilis (strain 168) protein is Probable metallophosphoesterase YsnB (ysnB).